A 483-amino-acid chain; its full sequence is UDP-N-acetylmuramyl-tripeptide synthetase (483 aa).

A UDP-N-acetyl-alpha-D-muramoyl-L-alanyl-D-glutamate-binding site is contributed by S43. 116 to 122 (GTKGKTT) is a binding site for ATP. Residues 160-161 (TT), S187, and R195 each bind UDP-N-acetyl-alpha-D-muramoyl-L-alanyl-D-glutamate. Residue K229 is modified to N6-carboxylysine.

The protein belongs to the MurCDEF family. MurE subfamily. In terms of processing, carboxylation is probably crucial for Mg(2+) binding and, consequently, for the gamma-phosphate positioning of ATP.

Its subcellular location is the cytoplasm. It functions in the pathway cell wall biogenesis; peptidoglycan biosynthesis. In terms of biological role, catalyzes the addition of an amino acid to the nucleotide precursor UDP-N-acetylmuramoyl-L-alanyl-D-glutamate (UMAG) in the biosynthesis of bacterial cell-wall peptidoglycan. The protein is UDP-N-acetylmuramyl-tripeptide synthetase of Lactococcus lactis subsp. cremoris (strain SK11).